The chain runs to 309 residues: tRNA uridine(34) hydroxylase (309 aa).

The Rhodanese domain occupies 130-225 (RGEEVVFFDG…YGEKYGNDGL (96 aa)). Cys185 (cysteine persulfide intermediate) is an active-site residue.

Belongs to the TrhO family.

The catalysed reaction is uridine(34) in tRNA + AH2 + O2 = 5-hydroxyuridine(34) in tRNA + A + H2O. Catalyzes oxygen-dependent 5-hydroxyuridine (ho5U) modification at position 34 in tRNAs. The chain is tRNA uridine(34) hydroxylase from Corynebacterium aurimucosum (strain ATCC 700975 / DSM 44827 / CIP 107346 / CN-1) (Corynebacterium nigricans).